A 155-amino-acid polypeptide reads, in one-letter code: uncharacterized protein (155 aa).

Residues 4–65 (IDEIDEVIVR…VVDPSFFGEF (62 aa)) form the HTH asnC-type domain. Positions 23-42 (LTELGRKVGLTASAVKNRIE) form a DNA-binding region, H-T-H motif.

This is an uncharacterized protein from Pyrococcus horikoshii (strain ATCC 700860 / DSM 12428 / JCM 9974 / NBRC 100139 / OT-3).